We begin with the raw amino-acid sequence, 1040 residues long: uncharacterized protein (1040 aa).

In terms of domain architecture, Helicase ATP-binding spans 403–588 (RLEESSKKGG…YSLIKFLRIK (186 aa)). 416–423 (DDMGLGKT) contributes to the ATP binding site. Residues 746–798 (CSLCMDVVAELLIIVPCGHFLCRECLTHVITSSEDMAKQTSNENISPKCSVCE) form an RING-type zinc finger. Residues 866-1032 (KIEKALNAVK…ISRLNTKELS (167 aa)) enclose the Helicase C-terminal domain.

This sequence belongs to the SNF2/RAD54 helicase family.

It localises to the nucleus. This is an uncharacterized protein from Schizosaccharomyces pombe (strain 972 / ATCC 24843) (Fission yeast).